Reading from the N-terminus, the 687-residue chain is TWiK family of potassium channels protein 12 (687 aa).

Topologically, residues 1-21 are cytoplasmic; that stretch reads MTLFQKLQWFCQLIRLRAYYK. A helical transmembrane segment spans residues 22–42; it reads FLLLIAYTLFGAWLFRFYELQ. N-linked (GlcNAc...) asparagine glycans are attached at residues Asn-53, Asn-77, and Asn-98. Positions 112 to 132 form an intramembrane region, pore-forming; the sequence is WTWTGAMFYAGQLYTTIGYGY. Residues 142-162 form a helical membrane-spanning segment; the sequence is ICTVLYALFGIPCFLMYLKAI. Over 163–212 the chain is Cytoplasmic; sequence GKTLSKRLKKIYKRVRRSAFGKFLLPTRVTATKDGFEDPDASAEERKRKP. The helical transmembrane segment at 213–233 threads the bilayer; it reads FPIPIAIILLIIWICFSASMF. Positions 242-262 form an intramembrane region, pore-forming; the sequence is FPSAVYFFIVSISTVGLGDML. A helical membrane pass occupies residues 270-290; the sequence is VFNFLLILFGLALLSMCFELI. Residues 291-687 are Cytoplasmic-facing; it reads TDRIAKWKQK…SKRDAPVNIV (397 aa). The interval 661–687 is disordered; sequence SPSTSTSTSMIDSGYDLSKRDAPVNIV. Over residues 677-687 the composition is skewed to basic and acidic residues; it reads LSKRDAPVNIV.

The protein belongs to the two pore domain potassium channel (TC 1.A.1.8) family.

It localises to the membrane. This is TWiK family of potassium channels protein 12 from Caenorhabditis briggsae.